Consider the following 126-residue polypeptide: Protein ApaG (126 aa).

The 125-residue stretch at 2 to 126 folds into the ApaG domain; sequence SDPRYQVDVS…FRLAVPGALH (125 aa).

The polypeptide is Protein ApaG (Pseudomonas fluorescens (strain ATCC BAA-477 / NRRL B-23932 / Pf-5)).